Reading from the N-terminus, the 125-residue chain is Ribonuclease P protein component (125 aa).

It belongs to the RnpA family. In terms of assembly, consists of a catalytic RNA component (M1 or rnpB) and a protein subunit.

It catalyses the reaction Endonucleolytic cleavage of RNA, removing 5'-extranucleotides from tRNA precursor.. RNaseP catalyzes the removal of the 5'-leader sequence from pre-tRNA to produce the mature 5'-terminus. It can also cleave other RNA substrates such as 4.5S RNA. The protein component plays an auxiliary but essential role in vivo by binding to the 5'-leader sequence and broadening the substrate specificity of the ribozyme. This is Ribonuclease P protein component from Clostridium perfringens (strain ATCC 13124 / DSM 756 / JCM 1290 / NCIMB 6125 / NCTC 8237 / Type A).